We begin with the raw amino-acid sequence, 259 residues long: Large ribosomal subunit protein uL2m (259 aa).

Positions 234–259 (VAMNPVDHPNGGRTKTPKPERSPGVE) are disordered. A compositionally biased stretch (basic and acidic residues) spans 250–259 (PKPERSPGVE).

The protein belongs to the universal ribosomal protein uL2 family.

It localises to the mitochondrion. The protein is Large ribosomal subunit protein uL2m (RPL2) of Paramecium tetraurelia.